The following is a 177-amino-acid chain: Large ribosomal subunit protein uL6 (177 aa).

The protein belongs to the universal ribosomal protein uL6 family. As to quaternary structure, part of the 50S ribosomal subunit.

Functionally, this protein binds to the 23S rRNA, and is important in its secondary structure. It is located near the subunit interface in the base of the L7/L12 stalk, and near the tRNA binding site of the peptidyltransferase center. The protein is Large ribosomal subunit protein uL6 of Glaesserella parasuis serovar 5 (strain SH0165) (Haemophilus parasuis).